The sequence spans 155 residues: Ribonuclease H (155 aa).

The RNase H type-1 domain occupies 9-150 (DGQQVEMWTD…ADALANQGVE (142 aa)). Mg(2+) contacts are provided by Asp-18, Glu-56, Asp-78, and Asp-142.

Belongs to the RNase H family. As to quaternary structure, monomer. Requires Mg(2+) as cofactor.

The protein localises to the cytoplasm. The enzyme catalyses Endonucleolytic cleavage to 5'-phosphomonoester.. In terms of biological role, endonuclease that specifically degrades the RNA of RNA-DNA hybrids. The sequence is that of Ribonuclease H from Bordetella bronchiseptica (strain ATCC BAA-588 / NCTC 13252 / RB50) (Alcaligenes bronchisepticus).